The primary structure comprises 393 residues: GDSL esterase/lipase At1g28600 (393 aa).

The first 22 residues, 1–22 (MASLDSLVIFLFSTLFVTIVSS), serve as a signal peptide directing secretion. Residue Ser-38 is the Nucleophile of the active site. 2 N-linked (GlcNAc...) asparagine glycosylation sites follow: Asn-133 and Asn-317. Active-site residues include Asp-340 and His-343. Asn-382 carries an N-linked (GlcNAc...) asparagine glycan.

It belongs to the 'GDSL' lipolytic enzyme family.

Its subcellular location is the secreted. This Arabidopsis thaliana (Mouse-ear cress) protein is GDSL esterase/lipase At1g28600.